A 624-amino-acid chain; its full sequence is D-3-phosphoglycerate dehydrogenase 2, chloroplastic (624 aa).

The transit peptide at 1–49 (MAFSSSCSSVKAVNSRWTSPSPSPSSRFAVLPAFLHRRYATSVKLTAIS) directs the protein to the chloroplast. The residue at position 71 (S71) is a Phosphoserine. NAD(+)-binding positions include 231–232 (KV), D251, 310–312 (VAR), and D336. Residue R312 is part of the active site. The active site involves E341. H360 acts as the Proton donor in catalysis. NAD(+) is bound at residue 360 to 363 (HLGA). The region spanning 552–624 (LILCRQVDQP…AIEEFVFLKL (73 aa)) is the ACT domain.

It belongs to the D-isomer specific 2-hydroxyacid dehydrogenase family. Ubiquitous, but highly expressed in roots and in dark-grown leaf tissues. Expressed in the vasculature, stigma, anther filaments and shoot apical meristem. Not detected in the root meristem or in embryo.

Its subcellular location is the plastid. The protein localises to the chloroplast. The catalysed reaction is (2R)-3-phosphoglycerate + NAD(+) = 3-phosphooxypyruvate + NADH + H(+). It participates in amino-acid biosynthesis; L-serine biosynthesis; L-serine from 3-phospho-D-glycerate: step 1/3. Inhibited by 90 uM 3-phosphonooxypyruvate, but not by Ser, Thr, Val, Gly Trp, O-acetyl-L-Ser and Cys. Involved in the plastidial phosphorylated pathway of serine biosynthesis (PPSB). The protein is D-3-phosphoglycerate dehydrogenase 2, chloroplastic (PGDH2) of Arabidopsis thaliana (Mouse-ear cress).